The following is a 556-amino-acid chain: Arginine--tRNA ligase (556 aa).

A 'HIGH' region motif is present at residues 132 to 142; sequence ANPTGDLHLGH.

This sequence belongs to the class-I aminoacyl-tRNA synthetase family. In terms of assembly, monomer.

It localises to the cytoplasm. It catalyses the reaction tRNA(Arg) + L-arginine + ATP = L-arginyl-tRNA(Arg) + AMP + diphosphate. The sequence is that of Arginine--tRNA ligase (argS) from Bacillus subtilis (strain 168).